The following is a 510-amino-acid chain: Mitogen-activated protein kinase 9 (510 aa).

One can recognise a Protein kinase domain in the interval 23–314 (YQIQEVIGKG…AEEALADPYF (292 aa)). ATP-binding positions include 29 to 37 (IGKGSYGVV) and lysine 52. The active-site Proton acceptor is the aspartate 149. Position 185 is a phosphothreonine (threonine 185). Positions 185–187 (TDY) match the TXY motif. A Phosphotyrosine modification is found at tyrosine 187. Phosphothreonine is present on threonine 190. Residues 393–461 (NYGKGEKGSP…SDYRNGTSQT (69 aa)) form a disordered region. Positions 410-431 (LPRERVPAPKKENGSHNHDIEN) are enriched in basic and acidic residues. The segment covering 433–461 (SIASLVTTLESPPTSQHEGSDYRNGTSQT) has biased composition (polar residues).

It belongs to the protein kinase superfamily. CMGC Ser/Thr protein kinase family. MAP kinase subfamily. Post-translationally, dually phosphorylated on Thr-185 and Tyr-187, which activates the enzyme.

The enzyme catalyses L-seryl-[protein] + ATP = O-phospho-L-seryl-[protein] + ADP + H(+). The catalysed reaction is L-threonyl-[protein] + ATP = O-phospho-L-threonyl-[protein] + ADP + H(+). Activated by threonine and tyrosine phosphorylation. This is Mitogen-activated protein kinase 9 (MPK9) from Arabidopsis thaliana (Mouse-ear cress).